A 211-amino-acid chain; its full sequence is Arginine exporter protein ArgO (211 aa).

6 helical membrane-spanning segments follow: residues 1–21, 37–57, 68–88, 111–131, 147–167, and 182–202; these read MFTY…PLGP, LMIA…GIFG, LLAI…FGAL, IIIT…DTFV, WFAL…ALLA, and IINI…AKEG.

The protein belongs to the LysE/ArgO transporter (TC 2.A.75) family.

It is found in the cell inner membrane. It carries out the reaction L-arginine(in) = L-arginine(out). Functionally, involved in the export of arginine. Important to control the intracellular level of arginine and the correct balance between arginine and lysine. The chain is Arginine exporter protein ArgO from Klebsiella pneumoniae (strain 342).